Here is a 323-residue protein sequence, read N- to C-terminus: Methenyltetrahydromethanopterin cyclohydrolase (323 aa).

This sequence belongs to the MCH family.

It localises to the cytoplasm. It carries out the reaction 5,10-methenyl-5,6,7,8-tetrahydromethanopterin + H2O = N(5)-formyl-5,6,7,8-tetrahydromethanopterin + H(+). It functions in the pathway one-carbon metabolism; methanogenesis from CO(2); 5,10-methenyl-5,6,7,8-tetrahydromethanopterin from CO(2): step 3/3. In terms of biological role, catalyzes the reversible interconversion of 5-formyl-H(4)MPT to methenyl-H(4)MPT(+). This Methanococcus vannielii (strain ATCC 35089 / DSM 1224 / JCM 13029 / OCM 148 / SB) protein is Methenyltetrahydromethanopterin cyclohydrolase.